The primary structure comprises 300 residues: uncharacterized protein (300 aa).

His274 (proton acceptor) is an active-site residue.

This sequence belongs to the AB hydrolase superfamily. Monomer.

The enzyme catalyses a carboxylic ester + H2O = an alcohol + a carboxylate + H(+). This is an uncharacterized protein from Bacillus subtilis (strain 168).